The sequence spans 348 residues: tRNA N6-adenosine threonylcarbamoyltransferase (348 aa).

Fe cation is bound by residues histidine 111 and histidine 115. Residues 134–138 (LISGG), aspartate 167, glycine 180, and asparagine 277 each bind substrate. Aspartate 305 provides a ligand contact to Fe cation.

Belongs to the KAE1 / TsaD family. Fe(2+) serves as cofactor.

It is found in the cytoplasm. The enzyme catalyses L-threonylcarbamoyladenylate + adenosine(37) in tRNA = N(6)-L-threonylcarbamoyladenosine(37) in tRNA + AMP + H(+). Functionally, required for the formation of a threonylcarbamoyl group on adenosine at position 37 (t(6)A37) in tRNAs that read codons beginning with adenine. Is involved in the transfer of the threonylcarbamoyl moiety of threonylcarbamoyl-AMP (TC-AMP) to the N6 group of A37, together with TsaE and TsaB. TsaD likely plays a direct catalytic role in this reaction. The polypeptide is tRNA N6-adenosine threonylcarbamoyltransferase (Haemophilus ducreyi (strain 35000HP / ATCC 700724)).